The following is a 451-amino-acid chain: Tubulin alpha-2 chain (451 aa).

Residue glutamine 11 coordinates GTP. Lysine 40 carries the post-translational modification N6-acetyllysine. Positions 71, 144, 145, 179, 206, and 228 each coordinate GTP. Residue glutamate 71 participates in Mg(2+) binding. Residue glutamate 254 is part of the active site.

It belongs to the tubulin family. In terms of assembly, dimer of alpha and beta chains. A typical microtubule is a hollow water-filled tube with an outer diameter of 25 nm and an inner diameter of 15 nM. Alpha-beta heterodimers associate head-to-tail to form protofilaments running lengthwise along the microtubule wall with the beta-tubulin subunit facing the microtubule plus end conferring a structural polarity. Microtubules usually have 13 protofilaments but different protofilament numbers can be found in some organisms and specialized cells. Mg(2+) is required as a cofactor. Undergoes a tyrosination/detyrosination cycle, the cyclic removal and re-addition of a C-terminal tyrosine residue by the enzymes tubulin tyrosine carboxypeptidase (TTCP) and tubulin tyrosine ligase (TTL), respectively. In terms of processing, acetylation of alpha chains at Lys-40 stabilizes microtubules and affects affinity and processivity of microtubule motors. This modification has a role in multiple cellular functions, ranging from cell motility, cell cycle progression or cell differentiation to intracellular trafficking and signaling.

The protein localises to the cytoplasm. It is found in the cytoskeleton. It carries out the reaction GTP + H2O = GDP + phosphate + H(+). Tubulin is the major constituent of microtubules, a cylinder consisting of laterally associated linear protofilaments composed of alpha- and beta-tubulin heterodimers. Microtubules grow by the addition of GTP-tubulin dimers to the microtubule end, where a stabilizing cap forms. Below the cap, tubulin dimers are in GDP-bound state, owing to GTPase activity of alpha-tubulin. The polypeptide is Tubulin alpha-2 chain (TUBA2) (Hordeum vulgare (Barley)).